A 349-amino-acid polypeptide reads, in one-letter code: Hydrophobic dipeptide epimerase (349 aa).

Residues Thr-127 and 153-155 (KIK) contribute to the substrate site. Positions 186, 212, and 237 each coordinate Mg(2+). Substrate is bound by residues Lys-259 and 309-311 (DLD).

The protein belongs to the mandelate racemase/muconate lactonizing enzyme family. It depends on Mg(2+) as a cofactor.

In terms of biological role, catalyzes the epimerization a variety of hydrophobic dipeptides. Epimerase activity is highest with L-Ala-L-Tyr, and lower with L-Ala-L-Met, L-Ala-L-Phe, L-Tyr-L-Ala, L-Tyr-L-Met and L-Tyr-L-Trp (in vitro). This is Hydrophobic dipeptide epimerase from Flavobacteria bacterium (strain MS024-2A).